Here is an 809-residue protein sequence, read N- to C-terminus: Endoplasmin homolog (809 aa).

Positions 1–18 (MRKWALSCALLLVLLLTT) are cleaved as a signal peptide. ATP is bound by residues asparagine 111, aspartate 155, asparagine 168, and phenylalanine 200. Asparagine 111 carries an N-linked (GlcNAc...) asparagine glycan. Residues 293–320 (VPADEEESNEEEESTTETTEEEETEDDE) are compositionally biased toward acidic residues. The disordered stretch occupies residues 293–329 (VPADEEESNEEEESTTETTEEEETEDDEEKKPKTKTV). Residues asparagine 410, asparagine 450, and asparagine 617 are each glycosylated (N-linked (GlcNAc...) asparagine). The tract at residues 766–809 (SLDLSPDAAVEEEEEVEEPEVEEKESAKQEAEEPEHEQYDKDEL) is disordered. A compositionally biased stretch (acidic residues) spans 774–788 (AVEEEEEVEEPEVEE). Residues 789-809 (KESAKQEAEEPEHEQYDKDEL) show a composition bias toward basic and acidic residues. The short motif at 806-809 (KDEL) is the Prevents secretion from ER element.

It belongs to the heat shock protein 90 family.

The protein resides in the endoplasmic reticulum lumen. In terms of biological role, may have a molecular chaperone role in the processing of secreted materials. The chain is Endoplasmin homolog from Hordeum vulgare (Barley).